The sequence spans 252 residues: MLVHRLNALKDNYVFVLEDEAARTAAVVDPAEARPVLEALVRLGLKLVAIFNTHHHHDHVGGNRELLEAYPGIAVYASRRDRGRIPGQTVELEDGDTVAFGCERARVIFVPGHTHGHIAYHFAGCGHLFCGDTLFAGGCGRLFEGTARQMQHSLGRLRELPGETQVWCAHEYTLGNLRFAHTLEPDNAELAERLRTVEVLRARKIATVPSTMAAERATNPFLRWESRQLQRAAGAIEPEEVFAHLRALKDRF.

Zn(2+)-binding residues include His-54, His-56, Asp-58, His-59, His-113, Asp-132, and His-170.

Belongs to the metallo-beta-lactamase superfamily. Glyoxalase II family. As to quaternary structure, monomer. Requires Zn(2+) as cofactor.

It carries out the reaction an S-(2-hydroxyacyl)glutathione + H2O = a 2-hydroxy carboxylate + glutathione + H(+). Its pathway is secondary metabolite metabolism; methylglyoxal degradation; (R)-lactate from methylglyoxal: step 2/2. Functionally, thiolesterase that catalyzes the hydrolysis of S-D-lactoyl-glutathione to form glutathione and D-lactic acid. This Gloeobacter violaceus (strain ATCC 29082 / PCC 7421) protein is Hydroxyacylglutathione hydrolase.